The chain runs to 488 residues: GTPase Der (488 aa).

EngA-type G domains follow at residues 3–166 and 201–374; these read PVVA…VSDG and IKLA…QCAT. GTP contacts are provided by residues 9-16, 56-60, 118-121, 207-214, 254-258, and 319-322; these read GRPNVGKS, DTGGI, NKTD, DTAGV, and NKWD. The region spanning 375 to 459 is the KH-like domain; the sequence is KRVSTALLTR…PIRIQFNEGA (85 aa).

This sequence belongs to the TRAFAC class TrmE-Era-EngA-EngB-Septin-like GTPase superfamily. EngA (Der) GTPase family. As to quaternary structure, associates with the 50S ribosomal subunit.

In terms of biological role, GTPase that plays an essential role in the late steps of ribosome biogenesis. The polypeptide is GTPase Der (Sodalis glossinidius (strain morsitans)).